The sequence spans 390 residues: Elongation factor Tu 2 (390 aa).

One can recognise a tr-type G domain in the interval 10–201; that stretch reads KPHVNVGTIG…LDEYVAVPPR (192 aa). Positions 19-26 are G1; sequence GHVDHGKT. 19 to 26 contacts GTP; the sequence is GHVDHGKT. Threonine 26 contacts Mg(2+). Residues 55–59 are G2; that stretch reads GITIA. Residues 76–79 are G3; it reads DCPG. Residues 76-80 and 131-134 each bind GTP; these read DCPGH and NKAD. The tract at residues 131–134 is G4; that stretch reads NKAD. A G5 region spans residues 168–170; sequence SAL.

The protein belongs to the TRAFAC class translation factor GTPase superfamily. Classic translation factor GTPase family. EF-Tu/EF-1A subfamily. Monomer.

It is found in the cytoplasm. The catalysed reaction is GTP + H2O = GDP + phosphate + H(+). Functionally, GTP hydrolase that promotes the GTP-dependent binding of aminoacyl-tRNA to the A-site of ribosomes during protein biosynthesis. This Wolbachia pipientis wMel protein is Elongation factor Tu 2.